Here is a 153-residue protein sequence, read N- to C-terminus: Large ribosomal subunit protein uL22 (153 aa).

It belongs to the universal ribosomal protein uL22 family. In terms of assembly, part of the 50S ribosomal subunit.

This protein binds specifically to 23S rRNA. It makes multiple contacts with different domains of the 23S rRNA in the assembled 50S subunit and ribosome. Its function is as follows. The globular domain of the protein is located near the polypeptide exit tunnel on the outside of the subunit, while an extended beta-hairpin is found that lines the wall of the exit tunnel in the center of the 70S ribosome. This is Large ribosomal subunit protein uL22 from Methanoculleus marisnigri (strain ATCC 35101 / DSM 1498 / JR1).